Here is a 545-residue protein sequence, read N- to C-terminus: Afadin- and alpha-actinin-binding protein B (545 aa).

Coiled coils occupy residues 106–287 (RSKE…SQRK) and 358–442 (ARGD…AIRL). A disordered region spans residues 497 to 545 (HDRHLASSGDHYQRPRKTLPITPSSKHSLTQRESVAWRDSSISPNGTDF). 2 stretches are compositionally biased toward polar residues: residues 517–529 (ITPS…TQRE) and 536–545 (SSISPNGTDF).

This sequence belongs to the ADIP family. As to quaternary structure, interacts with WRAP73.

It localises to the cell junction. It is found in the adherens junction. The protein resides in the cytoplasm. The protein localises to the cytoskeleton. Its subcellular location is the microtubule organizing center. It localises to the centrosome. It is found in the centriolar satellite. Its function is as follows. Belongs to an adhesion system, which plays a role in the organization of homotypic, interneuronal and heterotypic cell-cell adherens junctions (AJs). Involved in cell movement. Acts as a centrosome maturation factor, probably by maintaining the integrity of the pericentriolar material and proper microtubule nucleation at mitotic spindle poles. The function seems to implicate at least in part WRAP73; the SSX2IP:WRAP73 complex is proposed to act as regulator of spindle anchoring at the mitotic centrosome. This Xenopus laevis (African clawed frog) protein is Afadin- and alpha-actinin-binding protein B (ssx2ip-b).